The primary structure comprises 453 residues: uncharacterized protein (453 aa).

To B.subtilis YcdB.

This is an uncharacterized protein from Bacillus subtilis (strain 168).